The following is a 338-amino-acid chain: Phenylalanine--tRNA ligase alpha subunit (338 aa).

Glutamate 253 is a binding site for Mg(2+).

This sequence belongs to the class-II aminoacyl-tRNA synthetase family. Phe-tRNA synthetase alpha subunit type 1 subfamily. Tetramer of two alpha and two beta subunits. Requires Mg(2+) as cofactor.

It is found in the cytoplasm. The enzyme catalyses tRNA(Phe) + L-phenylalanine + ATP = L-phenylalanyl-tRNA(Phe) + AMP + diphosphate + H(+). The sequence is that of Phenylalanine--tRNA ligase alpha subunit from Syntrophus aciditrophicus (strain SB).